Here is a 107-residue protein sequence, read N- to C-terminus: Large ribosomal subunit protein uL24 (107 aa).

The protein belongs to the universal ribosomal protein uL24 family. Part of the 50S ribosomal subunit.

One of two assembly initiator proteins, it binds directly to the 5'-end of the 23S rRNA, where it nucleates assembly of the 50S subunit. In terms of biological role, one of the proteins that surrounds the polypeptide exit tunnel on the outside of the subunit. This is Large ribosomal subunit protein uL24 from Neisseria gonorrhoeae (strain ATCC 700825 / FA 1090).